The following is a 1686-amino-acid chain: Thrombospondin type-1 domain-containing protein 7A (1686 aa).

Positions Met-1–Thr-36 are cleaved as a signal peptide. Residues Gln-37 to Trp-1635 are Extracellular-facing. TSP type-1 domains are found at residues Pro-44 to Asp-103, Glu-107 to Pro-181, and Asp-183 to Glu-236. N-linked (GlcNAc...) asparagine glycosylation is present at Asn-223. Residues Ile-257 to Thr-321 form a disordered region. Composition is skewed to basic and acidic residues over residues Gln-259–Glu-272 and Glu-294–Thr-321. TSP type-1 domains follow at residues Asp-385–Gly-441, Val-448–Pro-535, Glu-537–Tyr-596, Asp-656–Thr-717, Val-718–Lys-797, Asp-799–Pro-859, Gly-860–Gln-932, Asp-934–Pro-985, Lys-988–Pro-1061, Asp-1063–Ser-1123, Gln-1124–Pro-1191, Asp-1193–Phe-1247, His-1248–Pro-1311, Asn-1313–Phe-1368, Ser-1369–Pro-1439, and Glu-1441–Tyr-1502. 3 cysteine pairs are disulfide-bonded: Cys-460–Cys-530, Cys-480–Cys-534, and Cys-491–Cys-519. Asn-475 carries N-linked (GlcNAc...) asparagine glycosylation. N-linked (GlcNAc...) asparagine glycosylation is present at Asn-525. 2 cysteine pairs are disulfide-bonded: Cys-657/Cys-699 and Cys-668/Cys-672. An N-linked (GlcNAc...) asparagine glycan is attached at Asn-701. 7 cysteine pairs are disulfide-bonded: Cys-711/Cys-716, Cys-729/Cys-792, Cys-756/Cys-796, Cys-767/Cys-780, Cys-800/Cys-842, Cys-811/Cys-815, and Cys-852/Cys-858. N-linked (GlcNAc...) asparagine glycosylation occurs at Asn-739. A glycan (N-linked (GlcNAc...) asparagine) is linked at Asn-996. Intrachain disulfides connect Cys-1000–Cys-1056, Cys-1022–Cys-1060, Cys-1033–Cys-1046, Cys-1064–Cys-1101, Cys-1075–Cys-1079, and Cys-1118–Cys-1122. An N-linked (GlcNAc...) asparagine glycan is attached at Asn-1071. A glycan (N-linked (GlcNAc...) asparagine) is linked at Asn-1212. Cys-1240 and Cys-1246 are disulfide-bonded. The N-linked (GlcNAc...) asparagine glycan is linked to Asn-1252. 12 cysteine pairs are disulfide-bonded: Cys-1259/Cys-1306, Cys-1267/Cys-1310, Cys-1278/Cys-1291, Cys-1314/Cys-1352, Cys-1325/Cys-1329, Cys-1362/Cys-1367, Cys-1378/Cys-1434, Cys-1385/Cys-1438, Cys-1396/Cys-1415, Cys-1442/Cys-1486, Cys-1453/Cys-1457, and Cys-1496/Cys-1501. Asn-1303 carries N-linked (GlcNAc...) asparagine glycosylation. Asn-1393 is a glycosylation site (N-linked (GlcNAc...) asparagine). Asn-1527 carries an N-linked (GlcNAc...) asparagine glycan. Residues Val-1636–Leu-1656 traverse the membrane as a helical segment. The Cytoplasmic portion of the chain corresponds to Ala-1657 to Met-1686.

Post-translationally, extensively N-glycosylated.

It localises to the cell membrane. Its subcellular location is the cell projection. Required for normal sprouting angiogenesis and normal embryonic development of intersegmental vessels (ISV). Required for normal function of the glomerular filtration barrier. Required for normal axon outgrowth on embryonic motor neurons at the level of the horizontal myoseptum. Required for normal expression of notch1b, suggesting that its functions in angiogenesis and neuron outgrowth are due to decreased expression of notch1b. Plays a role in actin cytoskeleton rearrangement. The polypeptide is Thrombospondin type-1 domain-containing protein 7A (Danio rerio (Zebrafish)).